The primary structure comprises 46 residues: Succinate dehydrogenase subunit 8, mitochondrial (46 aa).

As to quaternary structure, component of complex II composed of eight subunits in plants: four classical SDH subunits SDH1, SDH2, SDH3 and SDH4 (a flavoprotein (FP), an iron-sulfur protein (IP), and a cytochrome b composed of a large and a small subunit.), as well as four subunits unknown in mitochondria from bacteria and heterotrophic eukaryotes.

It localises to the mitochondrion inner membrane. The protein operates within carbohydrate metabolism; tricarboxylic acid cycle. This chain is Succinate dehydrogenase subunit 8, mitochondrial, found in Arabidopsis thaliana (Mouse-ear cress).